A 210-amino-acid chain; its full sequence is Protein-L-isoaspartate O-methyltransferase (210 aa).

The active site involves Ser-59.

It belongs to the methyltransferase superfamily. L-isoaspartyl/D-aspartyl protein methyltransferase family.

The protein localises to the cytoplasm. It catalyses the reaction [protein]-L-isoaspartate + S-adenosyl-L-methionine = [protein]-L-isoaspartate alpha-methyl ester + S-adenosyl-L-homocysteine. Catalyzes the methyl esterification of L-isoaspartyl residues in peptides and proteins that result from spontaneous decomposition of normal L-aspartyl and L-asparaginyl residues. It plays a role in the repair and/or degradation of damaged proteins. This chain is Protein-L-isoaspartate O-methyltransferase, found in Nitratidesulfovibrio vulgaris (strain ATCC 29579 / DSM 644 / CCUG 34227 / NCIMB 8303 / VKM B-1760 / Hildenborough) (Desulfovibrio vulgaris).